The following is a 152-amino-acid chain: SsrA-binding protein (152 aa).

It belongs to the SmpB family.

The protein resides in the cytoplasm. Required for rescue of stalled ribosomes mediated by trans-translation. Binds to transfer-messenger RNA (tmRNA), required for stable association of tmRNA with ribosomes. tmRNA and SmpB together mimic tRNA shape, replacing the anticodon stem-loop with SmpB. tmRNA is encoded by the ssrA gene; the 2 termini fold to resemble tRNA(Ala) and it encodes a 'tag peptide', a short internal open reading frame. During trans-translation Ala-aminoacylated tmRNA acts like a tRNA, entering the A-site of stalled ribosomes, displacing the stalled mRNA. The ribosome then switches to translate the ORF on the tmRNA; the nascent peptide is terminated with the 'tag peptide' encoded by the tmRNA and targeted for degradation. The ribosome is freed to recommence translation, which seems to be the essential function of trans-translation. The sequence is that of SsrA-binding protein from Lactobacillus helveticus (strain DPC 4571).